The sequence spans 252 residues: MSRKPFIAGNWKMNKNPEEAKAFIEAVASKLPSSELVEAGIAAPALTLSTVLEAAKGSELKIAAQNSYFENSGAFTGENSPKVLAEMGTDYVVIGHSERRDYFHETDQDINKKAKAIFANGLTPIICCGESLETYEAGKAVEFVGAQVSAALAGLSEEQVSSLVIAYEPIWAIGTGKSATQDDAQNMCKAVRDVVAADFGQAVADKVRVQYGGSVKPENVAEYMACPDVDGALVGGASLEAESFLALLDFVK.

A substrate-binding site is contributed by 10 to 12; the sequence is NWK. His96 functions as the Electrophile in the catalytic mechanism. Glu168 acts as the Proton acceptor in catalysis. Substrate-binding positions include Gly174, Ser214, and 235–236; that span reads GG.

It belongs to the triosephosphate isomerase family. In terms of assembly, homodimer.

It localises to the cytoplasm. The enzyme catalyses D-glyceraldehyde 3-phosphate = dihydroxyacetone phosphate. It participates in carbohydrate biosynthesis; gluconeogenesis. It functions in the pathway carbohydrate degradation; glycolysis; D-glyceraldehyde 3-phosphate from glycerone phosphate: step 1/1. Its function is as follows. Involved in the gluconeogenesis. Catalyzes stereospecifically the conversion of dihydroxyacetone phosphate (DHAP) to D-glyceraldehyde-3-phosphate (G3P). The sequence is that of Triosephosphate isomerase from Streptococcus agalactiae serotype Ia (strain ATCC 27591 / A909 / CDC SS700).